An 873-amino-acid polypeptide reads, in one-letter code: E3 ubiquitin-protein ligase UPL5 (873 aa).

A compositionally biased stretch (polar residues) spans Met-1–Tyr-19. Disordered stretches follow at residues Met-1 to Asp-37 and Arg-70 to Pro-90. Residues Leu-95 to Thr-171 form the Ubiquitin-like domain. A C-type lectin domain is found at Cys-272–Cys-296. An HECT domain is found at Ser-532 to Trp-873. Cys-839 acts as the Glycyl thioester intermediate in catalysis.

The protein belongs to the UPL family. As to quaternary structure, interacts with WRKY53.

The protein localises to the cytoplasm. The catalysed reaction is S-ubiquitinyl-[E2 ubiquitin-conjugating enzyme]-L-cysteine + [acceptor protein]-L-lysine = [E2 ubiquitin-conjugating enzyme]-L-cysteine + N(6)-ubiquitinyl-[acceptor protein]-L-lysine.. Its pathway is protein modification; protein ubiquitination. Its function is as follows. E3 ubiquitin protein ligase that regulates leaf senescence through ubiquitination and subsequent degradation of WRKY53. This is E3 ubiquitin-protein ligase UPL5 (UPL5) from Arabidopsis thaliana (Mouse-ear cress).